Consider the following 276-residue polypeptide: Short-chain dehydrogenase/reductase ATR10 (276 aa).

Positions 29, 51, 78, and 105 each coordinate NADP(+). S161 serves as the catalytic Proton donor. Positions 185 and 214 each coordinate NADP(+). K185 functions as the Lowers pKa of active site Tyr in the catalytic mechanism.

This sequence belongs to the short-chain dehydrogenases/reductases (SDR) family.

It functions in the pathway mycotoxin biosynthesis. Functionally, short-chain dehydrogenase/reductase; part of the core atranone cluster (CAC) which products are predicted to catalyze most or all steps of mycotoxin atranone synthesis, starting from geranylgeranyl pyrophosphate (GGPP). The initial cyclization of GGPP to dolabellane is probably performed by the terpene cyclase ATR13. The Baeyer-Villiger oxidation near the end of the atranone synthesis, which converts atranones D and E to atranones F and G is predicted to be catalyzed by the monooxygenase ATR8. Of the CAC's other predicted gene products, the reducing PKS ATR6 might synthesize a polyketide chain. This polyketide is probably transferred onto the atranone backbone by the polyketide transferase ATR5. Other predicted CAC products include 4 oxygenases (ATR2, ATR3, ATR4, and ATR14), 3 short-chain reductases (ATR7, ATR9, and ATR10), and a methyltransferase (ATR12). These may all be involved in the various steps of atranone biosynthesis, although their specific roles must await experimental determination. In Stachybotrys chlorohalonatus (strain IBT 40285), this protein is Short-chain dehydrogenase/reductase ATR10.